The sequence spans 98 residues: Omega-hexatoxin-Hr2b (98 aa).

A signal peptide spans 1–22 (MKFSKLSLTLALILTQVLFVLC). Positions 24-56 (KINEDFMKHGLESQALHDEIRKPIDSENPDTER) are excised as a propeptide. Cystine bridges form between Cys60/Cys74, Cys67/Cys80, and Cys73/Cys85. Leu97 carries the post-translational modification Leucine amide.

Belongs to the neurotoxin 15 family. 02 (omega-actx) subfamily. As to expression, expressed by the venom gland.

The protein localises to the secreted. Potent inhibitor of insect, but not mammalian, voltage-gated calcium channels (Cav). The polypeptide is Omega-hexatoxin-Hr2b (Atrax robustus (Sydney funnel-web spider)).